A 403-amino-acid chain; its full sequence is MTELKLNPYFGEYGGMYVPQILVPALKQLETAFVEAQQDESFIAEFTDLLKNYAGRPTALTLTRNLSPNPLVKIYLKREDLLHGGAHKTNQVLGQALLAKRMGKKEIIAETGAGQHGVATALACALLGLKCKVYMGAKDIERQSPNVFRMKLMGAEVIPVTSGSSTLKDACNEAMRDWSASYDKAHYLLGTAAGPHPFPTIVREFQRMIGEETKKQILEKEGRLPDAVIACVGGGSNAIGMFADFIDEPSVELIGVEPAGKGIDTPMHGAPLKHGKTGIFFGMKSPLMQNSDGQIEESYSVSAGLDFPSVGPQHAHLNAIGRARYESATDDEALEMFQTLARCEGIIPALESAHALAYAVRMAKEATKETILVVNLSGRGDKDIFTVADILEAKQKQQESGNE.

Position 88 is an N6-(pyridoxal phosphate)lysine (K88).

Belongs to the TrpB family. Tetramer of two alpha and two beta chains. Requires pyridoxal 5'-phosphate as cofactor.

It carries out the reaction (1S,2R)-1-C-(indol-3-yl)glycerol 3-phosphate + L-serine = D-glyceraldehyde 3-phosphate + L-tryptophan + H2O. Its pathway is amino-acid biosynthesis; L-tryptophan biosynthesis; L-tryptophan from chorismate: step 5/5. In terms of biological role, the beta subunit is responsible for the synthesis of L-tryptophan from indole and L-serine. The protein is Tryptophan synthase beta chain of Shewanella frigidimarina (strain NCIMB 400).